The sequence spans 632 residues: tRNA uridine 5-carboxymethylaminomethyl modification enzyme MnmG (632 aa).

14–19 contributes to the FAD binding site; sequence GAGHAG. 273–287 provides a ligand contact to NAD(+); sequence GPRYCPSFEDKIMRF.

This sequence belongs to the MnmG family. As to quaternary structure, homodimer. Heterotetramer of two MnmE and two MnmG subunits. FAD serves as cofactor.

The protein localises to the cytoplasm. NAD-binding protein involved in the addition of a carboxymethylaminomethyl (cmnm) group at the wobble position (U34) of certain tRNAs, forming tRNA-cmnm(5)s(2)U34. The chain is tRNA uridine 5-carboxymethylaminomethyl modification enzyme MnmG from Clostridium novyi (strain NT).